Consider the following 275-residue polypeptide: Succinate dehydrogenase [ubiquinone] iron-sulfur subunit, mitochondrial (275 aa).

A mitochondrion-targeting transit peptide spans 1-24 (MFSRRIQVLSPFLKHFVNRNARMM). Positions 57-137 (PEVKPKLQKY…PTKIYPLPHC (81 aa)) constitute a 2Fe-2S ferredoxin-type domain. Residues Cys-98, Cys-103, Cys-106, and Cys-118 each contribute to the [2Fe-2S] cluster site. The 4Fe-4S ferredoxin-type domain maps to 178–208 (DRAKLDGLYECILCACCSTSCPSYWWNSEEY). [4Fe-4S] cluster is bound by residues Cys-188, Cys-191, and Cys-194. Cys-198 contributes to the [3Fe-4S] cluster binding site. Residue Trp-203 coordinates a ubiquinone. [3Fe-4S] cluster is bound by residues Cys-245 and Cys-251. Cys-255 serves as a coordination point for [4Fe-4S] cluster.

This sequence belongs to the succinate dehydrogenase/fumarate reductase iron-sulfur protein family. As to quaternary structure, component of complex II composed of four subunits: a flavoprotein (FP), an iron-sulfur protein (IP), and a cytochrome b composed of a large and a small subunit. [2Fe-2S] cluster serves as cofactor. Requires [3Fe-4S] cluster as cofactor. It depends on [4Fe-4S] cluster as a cofactor.

The protein localises to the mitochondrion inner membrane. The catalysed reaction is a quinone + succinate = fumarate + a quinol. It functions in the pathway carbohydrate metabolism; tricarboxylic acid cycle; fumarate from succinate (eukaryal route): step 1/1. Functionally, iron-sulfur protein (IP) subunit of succinate dehydrogenase (SDH) that is involved in complex II of the mitochondrial electron transport chain and is responsible for transferring electrons from succinate to ubiquinone (coenzyme Q). This Schizosaccharomyces pombe (strain 972 / ATCC 24843) (Fission yeast) protein is Succinate dehydrogenase [ubiquinone] iron-sulfur subunit, mitochondrial (sdh2).